The chain runs to 550 residues: Methyl-coenzyme M reductase I subunit alpha (550 aa).

Glutamine 147 contacts coenzyme F430. Coenzyme B-binding positions include arginine 225, 256 to 257 (KH), and arginine 270. Histidine 257 carries the post-translational modification Pros-methylhistidine. A 5-methylarginine modification is found at arginine 271. A coenzyme M-binding site is contributed by tyrosine 333. A 2-methylglutamine modification is found at glutamine 400. Position 444 (tyrosine 444) interacts with coenzyme M. Glycine 445 bears the 1-thioglycine mark. Aspartate 450 carries the post-translational modification (Z)-2,3-didehydroaspartate. Residue cysteine 452 is modified to S-methylcysteine.

The protein belongs to the methyl-coenzyme M reductase alpha subunit family. In terms of assembly, MCR is a hexamer of two alpha, two beta, and two gamma chains, forming a dimer of heterotrimers. The cofactor is coenzyme F430. In terms of processing, the alpha subunit contains six modified amino acids near the active site region. Is methylated on His-257, Arg-271, Gln-400 and Cys-452, probably by the action of specific S-adenosylmethionine-dependent methyltransferases. Also contains a thioglycine at position 445, forming a thiopeptide bond. Contains a didehydroaspartate residue at position 450. The methylation on C5 of Arg-271 is a post-translational methylation not essential in vivo, but which plays a role for the stability and structural integrity of MCR.

The protein localises to the cytoplasm. It catalyses the reaction coenzyme B + methyl-coenzyme M = methane + coenzyme M-coenzyme B heterodisulfide. It functions in the pathway one-carbon metabolism; methyl-coenzyme M reduction; methane from methyl-coenzyme M: step 1/1. Its activity is regulated as follows. Methyl-coenzyme M reductase activity is inhibited by 3-nitrooxypropanol (3-NOP) in vitro and in vivo, by oxidation of its active site Ni(I), which stops both growth and methanogenesis. Is also inhibited by the reaction product CoM-S-S-CoB. Its function is as follows. Component of the methyl-coenzyme M reductase (MCR) I that catalyzes the reductive cleavage of methyl-coenzyme M (CoM-S-CH3 or 2-(methylthio)ethanesulfonate) using coenzyme B (CoB or 7-mercaptoheptanoylthreonine phosphate) as reductant which results in the production of methane and the mixed heterodisulfide of CoB and CoM (CoM-S-S-CoB). This is the final step in methanogenesis. Neither N-6-mercaptohexanoylthreonine phosphate (H-S-HxoTP) nor N-8-mercaptooctanoylthreonine phosphate (H-SOcoTP) nor any other thiol compound such as CoA or CoM can substitute for CoB as the electron donor. The sequence is that of Methyl-coenzyme M reductase I subunit alpha (mcrA) from Methanothermobacter marburgensis (strain ATCC BAA-927 / DSM 2133 / JCM 14651 / NBRC 100331 / OCM 82 / Marburg) (Methanobacterium thermoautotrophicum).